The following is a 610-amino-acid chain: Ecto-NOX disulfide-thiol exchanger 2 (610 aa).

The region spanning 128–207 (KTVFVGGLPE…GRLHVDFAQA (80 aa)) is the RRM domain. 2 coiled-coil regions span residues 293-328 (IQSANSHVRRLVNEKAAHEKDMEEAKEKFKQALSGI) and 381-505 (RREE…KESC).

Belongs to the ENOX family. Cu cation is required as a cofactor. Glycosylated. As to expression, found in the sera of cancer patients with a wide variety of cancers including breast, prostate, lung and ovarian cancers, leukemias, and lymphomas. Not found in the serum of healthy volunteers or patients with disorders other than cancer. Probably shed into serum by cancer cells. Found on the cell borders of renal, kidney and ovarian carcinomas but not on the borders of surrounding non-cancerous stromal cells.

It localises to the cell membrane. It is found in the secreted. The protein localises to the extracellular space. With respect to regulation, inhibited by the antitumor sulfonylurea LY181984, the vabilloid capsaicin, and retinoids. Its function is as follows. May be involved in cell growth. Probably acts as a terminal oxidase of plasma electron transport from cytosolic NAD(P)H via hydroquinones to acceptors at the cell surface. Hydroquinone oxidase activity alternates with a protein disulfide-thiol interchange/oxidoreductase activity which may control physical membrane displacements associated with vesicle budding or cell enlargement. The activities oscillate with a period length of 22 minutes and play a role in control of the ultradian cellular biological clock. The protein is Ecto-NOX disulfide-thiol exchanger 2 (ENOX2) of Homo sapiens (Human).